The chain runs to 292 residues: Cbb3-type cytochrome c oxidase subunit CcoP (292 aa).

2 consecutive transmembrane segments (helical) span residues 11-31 and 62-82; these read FGLI…SSLI and VGWI…FFFG. Cytochrome c domains lie at 116–195 and 205–288; these read ELVD…MAEI and QLID…QSLK. Heme c-binding residues include cysteine 129, cysteine 132, histidine 133, methionine 174, cysteine 219, cysteine 222, histidine 223, and methionine 264.

The protein belongs to the CcoP / FixP family. Component of the cbb3-type cytochrome c oxidase at least composed of CcoN, CcoO, CcoQ and CcoP. It depends on heme c as a cofactor.

Its subcellular location is the cell inner membrane. It functions in the pathway energy metabolism; oxidative phosphorylation. Functionally, C-type cytochrome. Part of the cbb3-type cytochrome c oxidase complex. CcoP subunit is required for transferring electrons from donor cytochrome c via its heme groups to CcoO subunit. From there, electrons are shuttled to the catalytic binuclear center of CcoN subunit where oxygen reduction takes place. The complex also functions as a proton pump. This Helicobacter pylori (Campylobacter pylori) protein is Cbb3-type cytochrome c oxidase subunit CcoP.